A 253-amino-acid polypeptide reads, in one-letter code: MIEIGKTIIKFPPLIEGILIKRYKRFLADIELDDGEVVTAHCANTGPMKGVLWPGGRVRLKYSPSPKRKLDWSWEQAEVPSHNEKKKCWVGINTSLPNKLIKHLIEANCLERQFGQISSIKPEVVYGLERKSRIDLLLYPSIQNEDSRKIFVEVKNTTWCDDSLALFPDTVTTRGQKHLKELMSVYPDSRAVLIPCISRSDMELFSPGEIADPEYGRLFREALTKGVEVIPCAFGFFIDHITWEGTRPLKSSR.

It belongs to the SfsA family.

The polypeptide is Sugar fermentation stimulation protein homolog (Prochlorococcus marinus (strain NATL1A)).